The primary structure comprises 477 residues: UDP-N-acetylmuramate--L-alanine ligase (477 aa).

Residue 122-128 (GTHGKTT) coordinates ATP.

The protein belongs to the MurCDEF family.

The protein localises to the cytoplasm. The enzyme catalyses UDP-N-acetyl-alpha-D-muramate + L-alanine + ATP = UDP-N-acetyl-alpha-D-muramoyl-L-alanine + ADP + phosphate + H(+). It participates in cell wall biogenesis; peptidoglycan biosynthesis. Cell wall formation. The polypeptide is UDP-N-acetylmuramate--L-alanine ligase (Xylella fastidiosa (strain M23)).